The sequence spans 326 residues: DNA repair protein XRCC4 (326 aa).

Residues 1-212 (MERKVSRIYL…QLEESTKPER (212 aa)) form an interaction with IFFO1 region. Ser53 carries the post-translational modification Phosphoserine; by PRKDC. Coiled-coil stretches lie at residues 131-165 (LDTI…FEKC) and 185-209 (NEKK…ESTK). The interval 180–211 (FILVLNEKKTKIRSLHKLLNEVQQLEESTKPE) is interaction with LIG4. A Phosphoserine; by PRKDC modification is found at Ser193. Positions 203 to 326 (QLEESTKPER…RNSSPEDLFD (124 aa)) are disordered. Basic and acidic residues predominate over residues 206–226 (ESTKPERENPCSDKTPEEHGL). Tyr227 bears the Phosphotyrosine mark. The residue at position 230 (Ser230) is a Phosphoserine. Thr231 carries the phosphothreonine modification. Ser235 is modified (phosphoserine). Thr244 is modified (phosphothreonine). Ser250 bears the Phosphoserine mark. Ser254 is subject to Phosphoserine; by PRKDC. Positions 264-269 (RKRRHR) match the Nuclear localization signal motif. Lys290 participates in a covalent cross-link: Glycyl lysine isopeptide (Lys-Gly) (interchain with G-Cter in ubiquitin). Ser295 is modified (phosphoserine; by PRKDC). Ser296 bears the Phosphoserine mark. Phosphoserine; by PRKDC occurs at positions 307 and 312. Polar residues predominate over residues 307 to 326 (SAENMSLETLRNSSPEDLFD). Thr315 is subject to Phosphothreonine; by PRKDC. Ser319 and Ser320 each carry phosphoserine; by PRKDC.

Belongs to the XRCC4-XLF family. XRCC4 subfamily. As to quaternary structure, homodimer and homotetramer in solution. Interacts with NHEJ1/XLF; the interaction is direct and is mediated via a head-to-head interaction between N-terminal head regions. Interacts with LIG4; the LIG4-XRCC4 subcomplex has a 1:2 stoichiometry and XRCC4 is required for LIG4 stability. Component of the core long-range non-homologous end joining (NHEJ) complex (also named DNA-PK complex) composed of PRKDC, LIG4, XRCC4, XRCC6/Ku70, XRCC5/Ku86 and NHEJ1/XLF. Additional component of the NHEJ complex includes PAXX. Following autophosphorylation, PRKDC dissociates from DNA, leading to formation of the short-range NHEJ complex, composed of LIG4, XRCC4, XRCC6/Ku70, XRCC5/Ku86 and NHEJ1/XLF. Interacts with PRKDC; the interaction is direct. Interacts with XRCC6/Ku70; the interaction is direct. Interacts with APTX and APLF. Forms a heterotetramer with IFFO1; the interaction involves LIG4-free XRCC4 and leads to the relocalization of IFFO1 to the sites of DNA damage. Interacts with PNKP; mainly interacts with PNKP when phosphorylated at Thr-231, but is also able to interact at much lower level with PNKP when not unphosphorylated. Interacts with POLL (DNA polymerase lambda). Interacts with XKR4; interacts with the processed form of XKR4, which is cleaved by caspase. Post-translationally, phosphorylated by PRKDC at the C-terminus in response to DNA damage; Ser-254 and Ser-312 constitute the main phosphorylation sites. Phosphorylation by PRKDC at the C-terminus of XRCC4 and NHEJ1/XLF are highly redundant and regulate ability of the XRCC4-NHEJ1/XLF subcomplex to bridge DNA. Phosphorylation by PRKDC does not prevent interaction with NHEJ1/XLF but disrupts ability to bridge DNA and promotes detachment from DNA. Phosphorylation at Ser-319 and Ser-320 by PRKDC promotes recognition by the SCF(FBXW7) complex and subsequent ubiquitination via 'Lys-63'-linked ubiquitin. Phosphorylation at Thr-231 by CK2 promotes interaction with PNKP; regulating PNKP activity and localization to DNA damage sites. Phosphorylation by CK2 promotes interaction with APTX. Ubiquitinated at Lys-290 by the SCF(FBXW7) complex via 'Lys-63'-linked ubiquitination, thereby promoting double-strand break repair: the SCF(FBXW7) complex specifically recognizes XRCC4 when phosphorylated at Ser-319 and Ser-320 by PRKDC, and 'Lys-63'-linked ubiquitination facilitates DNA non-homologous end joining (NHEJ) by enhancing association with XRCC5/Ku80 and XRCC6/Ku70. Monoubiquitinated. In terms of processing, undergoes proteolytic processing by caspase-3 (CASP3). This generates the protein XRCC4, C-terminus (XRCC4/C), which translocates to the cytoplasm and activates phospholipid scramblase activity of XKR4, thereby promoting phosphatidylserine exposure on apoptotic cell surface.

It localises to the nucleus. Its subcellular location is the chromosome. The protein resides in the cytoplasm. In terms of biological role, DNA non-homologous end joining (NHEJ) core factor, required for double-strand break repair and V(D)J recombination. Acts as a scaffold protein that regulates recruitment of other proteins to DNA double-strand breaks (DSBs). Associates with NHEJ1/XLF to form alternating helical filaments that bridge DNA and act like a bandage, holding together the broken DNA until it is repaired. The XRCC4-NHEJ1/XLF subcomplex binds to the DNA fragments of a DSB in a highly diffusive manner and robustly bridges two independent DNA molecules, holding the broken DNA fragments in close proximity to one other. The mobility of the bridges ensures that the ends remain accessible for further processing by other repair factors. Plays a key role in the NHEJ ligation step of the broken DNA during DSB repair via direct interaction with DNA ligase IV (LIG4): the LIG4-XRCC4 subcomplex reseals the DNA breaks after the gap filling is completed. XRCC4 stabilizes LIG4, regulates its subcellular localization and enhances LIG4's joining activity. Binding of the LIG4-XRCC4 subcomplex to DNA ends is dependent on the assembly of the DNA-dependent protein kinase complex DNA-PK to these DNA ends. Promotes displacement of PNKP from processed strand break termini. Its function is as follows. Acts as an activator of the phospholipid scramblase activity of XKR4. This form, which is generated upon caspase-3 (CASP3) cleavage, translocates into the cytoplasm and interacts with XKR4, thereby promoting phosphatidylserine scramblase activity of XKR4 and leading to phosphatidylserine exposure on apoptotic cell surface. In Mus musculus (Mouse), this protein is DNA repair protein XRCC4.